The primary structure comprises 175 residues: General stress protein 14 (175 aa).

Belongs to the NAD(P)H dehydrogenase (quinone) family.

In Bacillus subtilis (strain 168), this protein is General stress protein 14 (ywrO).